The primary structure comprises 540 residues: 2-isopropylmalate synthase (540 aa).

The Pyruvate carboxyltransferase domain maps to valine 8–proline 269. Residues aspartate 17, histidine 208, histidine 210, and asparagine 244 each coordinate Mn(2+). The segment at glutamine 408 to isoleucine 540 is regulatory domain.

Belongs to the alpha-IPM synthase/homocitrate synthase family. LeuA type 1 subfamily. As to quaternary structure, homodimer. It depends on Mn(2+) as a cofactor.

The protein localises to the cytoplasm. The catalysed reaction is 3-methyl-2-oxobutanoate + acetyl-CoA + H2O = (2S)-2-isopropylmalate + CoA + H(+). The protein operates within amino-acid biosynthesis; L-leucine biosynthesis; L-leucine from 3-methyl-2-oxobutanoate: step 1/4. Catalyzes the condensation of the acetyl group of acetyl-CoA with 3-methyl-2-oxobutanoate (2-ketoisovalerate) to form 3-carboxy-3-hydroxy-4-methylpentanoate (2-isopropylmalate). The polypeptide is 2-isopropylmalate synthase (Prochlorococcus marinus (strain MIT 9313)).